The chain runs to 383 residues: Creatine kinase, testis isozyme (383 aa).

Residues 14 to 100 enclose the Phosphagen kinase N-terminal domain; that stretch reads KRLSPEEEFP…LDPIIEDRHG (87 aa). Residues 99 to 112 are compositionally biased toward basic and acidic residues; it reads HGGYKPTDKHKTDL. The tract at residues 99–119 is disordered; it reads HGGYKPTDKHKTDLNPDNLKG. The 243-residue stretch at 127-369 folds into the Phosphagen kinase C-terminal domain; sequence YVISSRVRTG…KLLVEMEKKL (243 aa). Residues 130–134, His-193, Arg-238, Arg-294, 322–327, and Asp-337 each bind ATP; these read SSRVR and RGTGGV.

The protein belongs to the ATP:guanido phosphotransferase family. Exists in many tissues, but preferentially in testis.

It catalyses the reaction creatine + ATP = N-phosphocreatine + ADP + H(+). Functionally, reversibly catalyzes the transfer of phosphate between ATP and various phosphogens (e.g. creatine phosphate). Creatine kinase isoenzymes play a central role in energy transduction in tissues with large, fluctuating energy demands, such as skeletal muscle, heart, brain and spermatozoa. This Oncorhynchus mykiss (Rainbow trout) protein is Creatine kinase, testis isozyme (tck1).